The sequence spans 207 residues: Octanoyltransferase (207 aa).

One can recognise a BPL/LPL catalytic domain in the interval 27 to 202 (GETPDELWIV…HLETRLARPQ (176 aa)). Substrate-binding positions include 66-73 (RGGQITYH), 133-135 (SLG), and 146-148 (GLS). C164 functions as the Acyl-thioester intermediate in the catalytic mechanism.

This sequence belongs to the LipB family.

It localises to the cytoplasm. It carries out the reaction octanoyl-[ACP] + L-lysyl-[protein] = N(6)-octanoyl-L-lysyl-[protein] + holo-[ACP] + H(+). The protein operates within protein modification; protein lipoylation via endogenous pathway; protein N(6)-(lipoyl)lysine from octanoyl-[acyl-carrier-protein]: step 1/2. In terms of biological role, catalyzes the transfer of endogenously produced octanoic acid from octanoyl-acyl-carrier-protein onto the lipoyl domains of lipoate-dependent enzymes. Lipoyl-ACP can also act as a substrate although octanoyl-ACP is likely to be the physiological substrate. In Laribacter hongkongensis (strain HLHK9), this protein is Octanoyltransferase.